Reading from the N-terminus, the 146-residue chain is Hemoglobin subunit beta-2 (146 aa).

Positions 2 to 146 (HWSAEEKQLI…VAHALARRYH (145 aa)) constitute a Globin domain. The heme b site is built by H63 and H92.

Belongs to the globin family. In terms of assembly, heterotetramer of two alpha chains and two beta chains. In terms of tissue distribution, red blood cells.

Involved in oxygen transport from the lung to the various peripheral tissues. The protein is Hemoglobin subunit beta-2 (HBB2) of Naja naja (Indian cobra).